The chain runs to 129 residues: MSNVPNELKYSKEHEWLRKEADGTYTVGITEHAQELLGDMVFVDLPDVGTTVNAGDDCAVAESVKAASDIYAPVSGEIVAVNDALSDSPELVNSEPYGQGWIFKIKASDEAEVAALLDASAYEALLEDE.

One can recognise a Lipoyl-binding domain in the interval 24 to 106 (TYTVGITEHA…YGQGWIFKIK (83 aa)). N6-lipoyllysine is present on Lys-65.

The protein belongs to the GcvH family. As to quaternary structure, the glycine cleavage system is composed of four proteins: P, T, L and H. (R)-lipoate is required as a cofactor.

In terms of biological role, the glycine cleavage system catalyzes the degradation of glycine. The H protein shuttles the methylamine group of glycine from the P protein to the T protein. The protein is Glycine cleavage system H protein of Cronobacter sakazakii (strain ATCC BAA-894) (Enterobacter sakazakii).